The sequence spans 379 residues: Cytochrome b (379 aa).

4 consecutive transmembrane segments (helical) span residues Phe33–Met53, Trp77–Val98, Trp113–Leu133, and Phe178–Leu198. Residues His83 and His97 each coordinate heme b. The heme b site is built by His182 and His196. Position 201 (His201) interacts with a ubiquinone. Transmembrane regions (helical) follow at residues Thr226–Tyr246, Leu288–Gln308, Leu320–Gly340, and Phe347–Pro367.

This sequence belongs to the cytochrome b family. The cytochrome bc1 complex contains 11 subunits: 3 respiratory subunits (MT-CYB, CYC1 and UQCRFS1), 2 core proteins (UQCRC1 and UQCRC2) and 6 low-molecular weight proteins (UQCRH/QCR6, UQCRB/QCR7, UQCRQ/QCR8, UQCR10/QCR9, UQCR11/QCR10 and a cleavage product of UQCRFS1). This cytochrome bc1 complex then forms a dimer. Heme b is required as a cofactor.

It localises to the mitochondrion inner membrane. Functionally, component of the ubiquinol-cytochrome c reductase complex (complex III or cytochrome b-c1 complex) that is part of the mitochondrial respiratory chain. The b-c1 complex mediates electron transfer from ubiquinol to cytochrome c. Contributes to the generation of a proton gradient across the mitochondrial membrane that is then used for ATP synthesis. The chain is Cytochrome b (MT-CYB) from Lepilemur septentrionalis (Northern sportive lemur).